Consider the following 185-residue polypeptide: Ribosome-recycling factor (185 aa).

This sequence belongs to the RRF family.

The protein resides in the cytoplasm. Responsible for the release of ribosomes from messenger RNA at the termination of protein biosynthesis. May increase the efficiency of translation by recycling ribosomes from one round of translation to another. The polypeptide is Ribosome-recycling factor (Clostridium kluyveri (strain NBRC 12016)).